The chain runs to 1171 residues: Pesticidal crystal protein Cry1Ea (1171 aa).

The disordered stretch occupies residues 1094-1124; it reads ESNSSVHASVYEEKSYTDRRRENPCESNRGY. Positions 1103–1117 are enriched in basic and acidic residues; the sequence is VYEEKSYTDRRRENP.

Belongs to the delta endotoxin family.

In terms of biological role, promotes colloidosmotic lysis by binding to the midgut epithelial cells of many lepidopteran larvae including Spodoptera species. The protein is Pesticidal crystal protein Cry1Ea (cry1Ea) of Bacillus thuringiensis subsp. kenyae.